The sequence spans 551 residues: Probable CoA ligase CCL5 (551 aa).

Residues Ser204 to Lys212, Gln345 to Thr350, Asp431, Val443 to Arg446, and Lys537 contribute to the ATP site. Residues Glu274–Gln345 are SBD1. Residues Gly346–Tyr410 are SBD2.

Belongs to the ATP-dependent AMP-binding enzyme family. In terms of tissue distribution, mostly expressed at low levels in glandular trichomes (lupulin glands) after flowering, and, to a lower extent, in stems, leaves, cones and flowers.

It is found in the cytoplasm. Its subcellular location is the cytosol. This Humulus lupulus (European hop) protein is Probable CoA ligase CCL5.